The sequence spans 1174 residues: PR domain zinc finger protein 15 (1174 aa).

The SET domain occupies 75 to 185 (SNLEIRRLDD…AGTELRVWYA (111 aa)). The segment at 252-307 (LPAGGQQHEAASEKEPDAPRMEPPTAAESKSIQSVMVTKEPKKKPRRGRKPKASKV) is disordered. The segment covering 261 to 271 (AASEKEPDAPR) has biased composition (basic and acidic residues). Basic residues predominate over residues 292–304 (PKKKPRRGRKPKA). 2 consecutive C2H2-type zinc fingers follow at residues 402–424 (HQCGTCSKVFQNSSNLSRHVRSH) and 434–457 (FKCEECSKLFSRKESLKQHVSYKH). A C2H2-type 3; degenerate zinc finger spans residues 468-486 (YRCGSCGKTFRMESALEFH). C2H2-type zinc fingers lie at residues 495-517 (FQCEMCFRFFSTNSNLSKHKKKH) and 522-544 (FACEVCSKMFYRKDVMLDHQRRH). K552 is covalently cross-linked (Glycyl lysine isopeptide (Lys-Gly) (interchain with G-Cter in SUMO2)). 2 consecutive C2H2-type zinc fingers follow at residues 571–593 (SGCPVCGKVFSCRSNMNKHLLTH) and 598–620 (YTCEICGRKFFRVDVLRDHIHVH). Residues 639–658 (IGISSEENDDNSDESADSEP) are disordered. Positions 644 to 655 (EENDDNSDESAD) are enriched in acidic residues. 8 C2H2-type zinc fingers span residues 661–684 (YSCKRCQLTFGRGKEYLKHIMEVH), 689–711 (HGCSICHRRFALKATYHAHMVIH), 725–747 (HPCEICGRIFNSIGNLERHKLIH), 753–775 (HACEQCGKSFARKDMLKEHMRVH), 781–803 (YLCAECGKGMKTKHALRHHMKLH), 809–831 (YECKECHRKFAQKVNMLKHYKRH), 837–859 (FMCELCGKTFSERNTMETHKLIH), and 865–888 (WTCSVCDKKYVTEYMLQKHVQLTH). 2 disordered regions span residues 957–1007 (AEGK…GDET) and 1147–1174 (LQPPQAPAAPQQAVQPQVQNEQQQMYSY). The segment covering 962–973 (GKAAKRSHKRKQ) has biased composition (basic residues). A compositionally biased stretch (low complexity) spans 1154–1174 (AAPQQAVQPQVQNEQQQMYSY).

As to expression, expressed in embryonic stem cells (ESCs) (at protein level).

The protein localises to the nucleus. Its function is as follows. Sequence-specific DNA-binding transcriptional regulator. Plays a role as a molecular node in a transcriptional network regulating embryonic development and cell fate decision. Stimulates the expression of upstream key transcriptional activators and repressors of the Wnt/beta-catenin and MAPK/ERK pathways, respectively, that are essential for naive pluripotency and self-renewal maintenance of embryonic stem cells (ESCs). Specifically promotes SPRY1 and RSPO1 transcription activation through recognition and direct binding of a specific DNA sequence in their promoter regions. Also plays a role in induced pluripotent stem cells (iPSCs) reprogramming. Involved in early embryo development. This is PR domain zinc finger protein 15 from Mus musculus (Mouse).